A 147-amino-acid polypeptide reads, in one-letter code: Hemoglobin subunit epsilon (147 aa).

The region spanning 3–147 (HFTAEEKAAI…VAIALGHKYH (145 aa)) is the Globin domain. Residues serine 14 and serine 51 each carry the phosphoserine modification. Heme b-binding residues include histidine 64 and histidine 93.

It belongs to the globin family. In terms of assembly, heterotetramer of two alpha chains and two epsilon chains in early embryonic hemoglobin Gower-2; two zeta chains and two epsilon chains in early embryonic hemoglobin Gower-1. Red blood cells.

Functionally, the epsilon chain is a beta-type chain of early mammalian embryonic hemoglobin. In Callithrix jacchus (White-tufted-ear marmoset), this protein is Hemoglobin subunit epsilon (HBE1).